Consider the following 87-residue polypeptide: uncharacterized protein (87 aa).

Residues asparagine 43–lysine 87 are disordered.

This is an uncharacterized protein from Bacillus subtilis (strain 168).